The chain runs to 435 residues: Serine/threonine-protein kinase 40 (435 aa).

Residues 1-10 (MKRRASDRGA) are compositionally biased toward basic and acidic residues. Residues 1-25 (MKRRASDRGAGETSARAKALGSGIS) form a disordered region. Positions 35–331 (FILGPRLGNS…ADVLEALSAI (297 aa)) constitute a Protein kinase domain. Residues 41-49 (LGNSPVPSI) and Lys-66 contribute to the ATP site. Arg-196 serves as the catalytic Proton acceptor.

This sequence belongs to the protein kinase superfamily. CAMK Ser/Thr protein kinase family. As to expression, strongly expressed in heart, brain, placenta, lung, skeletal muscle, kidney, spleen, thymus, prostate, liver, pancreas, testis, ovary, small intestine, colon and peripheral blood leukocytes.

Its subcellular location is the nucleus. It localises to the cytoplasm. The enzyme catalyses L-seryl-[protein] + ATP = O-phospho-L-seryl-[protein] + ADP + H(+). It catalyses the reaction L-threonyl-[protein] + ATP = O-phospho-L-threonyl-[protein] + ADP + H(+). Its function is as follows. May be a negative regulator of NF-kappa-B and p53-mediated gene transcription. The polypeptide is Serine/threonine-protein kinase 40 (STK40) (Homo sapiens (Human)).